The following is a 1553-amino-acid chain: MNFRCSSPLWYDDHLSDCVVNHYLSTLIPLTACLASAIACLISYFHARQNAKHIDTGFHPVASSEDEAVDQIAHVSQQYITAIPPVIEKLEVALILAEISIAIFLLIFSGENTDLTSVFASAVSSIYLLLILFVRLTRSLQSYVDLQPHSSVLYTLQWTCLTAIVHAAILGNSERNFTIATLVRFALFTFLCLFHWTAPRIPVEPYDEDHVLFLDPSEDETASLLSRMTFSWLDKLVWKAYRATLQVSDLYQLNHNHRSGVVAPRFKNTATNSLLWRLFGFFKSDLLWQGAWATLNSFAVFVPPVLMRSLLEYLEVPDLASQSTAWLYVTGLLVAGIVAGVAGCQCDWKGREMAARTRAVLINEIYTKVLRKGVALHLQTNSEQPEAADNFASDGNIFNLLTVDTEHVSEMSGYLYLVWITFPVQTAIGTYLLYRLLGISGIVGVALMLGLLPLNILISRRLVAVQARVLTASDARIQASSEILNNVRTIKYSAWEAVFKKRVLSKRRIELVEMRSRFIWWSINMTTFFSLPLIVTILTLFFYTVVWDNSMGTAVAFPALVIFSILRIPFNRIADAITFLLRAHVSLGRIEKFLQEQETGKYEQLSRTDSVEVGFNNATLTWPNGGFGNKAVTENKRSDIQLTELPSMRPFKLKGLNIRFQPGALNVICGPSGSGKSSLLLALLGEMALVNGQVFLPHKHNWHELSTDSLTETTAYCPQEAWILNRTIRANIVFDLPFDGRRYEAVLEAVALRPDIASFDQGDQTLAGEGGSRLSGGQKQRVSLARALYSRSKYVLLDDCLSAVDSKTANHIFFHAVKGDLMQGRTCMFATNSIQLTIPHCDYIVLLDDGRVRGQGTAEELVSEGRIDADIMQNKAEFGSEKPGAYDTIELDHAIKSPSSRSSLDTVSLLEVDPQQEDPEAGYEESKAEGAVAWSVIRTYLVTLGPPWYWVLVLFMFGIQQFISLATNIWIKEWAVRYDMLDNFAFDPIQRNATTRDETLDEPEEPQKVQARYYMAIYVAICLAYAFFTFARDLIVFYGSLKASSEIYERLLNSVLFAKLLFFDRIPLGQITNRFSRDVEVLDQNISTFSINTLQIAASLVMIIVFISSVVPAFLIAAVFICVAYWFVMTIFINGARDLRRIESVERSPVYQQFSEALSGCVSIRAYARASIFTAQNQVLVDRLNSPYLLQWASQQWLGFRVNFLGSLILFFTGAFVVWDLESVDPSSAALVLTYAAMFSESIMWFVQLYAIVQQNLNSVERVVEYTEIEQEANQPLKRAVYDLPEDWPSRGGVRFDAYTTRYAPELPPVLNDITFNVPPGKRVAVVGRTGAGKSTLTLALIRGLEAELGRIEIDGIDISEVTLDRLRQAVTVVPQDPGVFRGTLRDNLDPLHLYSNEEMIETLRAVRLLDAVRTYIPGNSATPLDCLDHPANALSRGQRQLLCIARTLLRRSRVLVFDEATASIDHTTDAAIQESLRASVTVGTTVITVAHRLLTIADYDKVVVLDAGCVAEQGSVQELLDRDDDGIFRRLCVQSGDLEKIERVAAEKSGRK.

A run of 4 helical transmembrane segments spans residues 27 to 47 (LIPL…YFHA), 90 to 110 (LEVA…IFSG), 114 to 134 (DLTS…ILFV), and 151 to 171 (SVLY…AILG). N176 carries an N-linked (GlcNAc...) asparagine glycan. A run of 5 helical transmembrane segments spans residues 177–197 (FTIA…FHWT), 286–306 (LLWQ…PPVL), 324–344 (TAWL…VAGC), 413–433 (GYLY…TYLL), and 438–458 (GISG…NILI). Residues 293 to 582 (ATLNSFAVFV…IADAITFLLR (290 aa)) form the ABC transmembrane type-1 1 domain. N524 carries N-linked (GlcNAc...) asparagine glycosylation. The next 2 membrane-spanning stretches (helical) occupy residues 527 to 547 (TFFS…TVVW) and 550 to 570 (SMGT…RIPF). A glycan (N-linked (GlcNAc...) asparagine) is linked at N617. In terms of domain architecture, ABC transporter 1 spans 635-874 (NKRSDIQLTE…GRIDADIMQN (240 aa)). 670–677 (GPSGSGKS) is a binding site for ATP. An N-linked (GlcNAc...) asparagine glycan is attached at N725. A helical membrane pass occupies residues 948–970 (WYWVLVLFMFGIQQFISLATNIW). The region spanning 951–1255 (VLVLFMFGIQ…FVQLYAIVQQ (305 aa)) is the ABC transmembrane type-1 2 domain. An N-linked (GlcNAc...) asparagine glycan is attached at N992. A helical transmembrane segment spans residues 1017 to 1037 (IYVAICLAYAFFTFARDLIVF). N1085 carries an N-linked (GlcNAc...) asparagine glycan. The next 4 helical transmembrane spans lie at 1086-1108 (ISTF…VFIS), 1113-1135 (AFLI…FING), 1204-1224 (FLGS…LESV), and 1229-1249 (AALV…FVQL). Positions 1294–1533 (VRFDAYTTRY…DDDGIFRRLC (240 aa)) constitute an ABC transporter 2 domain. Residue 1328–1335 (GRTGAGKS) coordinates ATP.

Belongs to the ABC transporter superfamily.

It is found in the membrane. It participates in mycotoxin biosynthesis. ABC-type transporter; part of the gene cluster that mediates the biosynthesis of the mycotoxin cyclochlorotine, a hepatotoxic and carcinogenic cyclic chlorinated pentapeptide. CctS is essential for the biosynthesis of cyclochlorotine, maybe as a chloride channel that supplies chloride for chlorination by cctP2. The sequence is that of ABC-type transporter cctS from Talaromyces islandicus (Penicillium islandicum).